Reading from the N-terminus, the 324-residue chain is MSGPPPPVALVRTAVRRALRDLPAGSLVLVACSGGPDSLALAGATAFVAPRLGLRAGGVTVDHGLQEGSAERADTVAALLRNLGFDPVERVSVTVGTAGGPEAAARSARYAALEKTADVHQAAAVLLGHTRDDQAETVLLRLARGSGARSLAAMATRTGRYLRPFLDVDRRTVHEAASLMGFEPWSDPHNTDPAYTRSRVRHEALPVLERVLGPGITEALARTATLLRDDADALDAWADQAQQQVGRGPTALDAAGLAGLPRAIRTRLLRRIALAAGCPAGALTAEHVFALDRLVTEWRGQSHVDLPGARRGRRHDGQIIVSAD.

33 to 38 (SGGPDS) contacts ATP.

Belongs to the tRNA(Ile)-lysidine synthase family.

The protein localises to the cytoplasm. It catalyses the reaction cytidine(34) in tRNA(Ile2) + L-lysine + ATP = lysidine(34) in tRNA(Ile2) + AMP + diphosphate + H(+). Ligates lysine onto the cytidine present at position 34 of the AUA codon-specific tRNA(Ile) that contains the anticodon CAU, in an ATP-dependent manner. Cytidine is converted to lysidine, thus changing the amino acid specificity of the tRNA from methionine to isoleucine. The polypeptide is tRNA(Ile)-lysidine synthase (Thermobifida fusca (strain YX)).